A 689-amino-acid chain; its full sequence is DNA ligase (689 aa).

NAD(+) is bound by residues 40 to 44 (DAEYD), 89 to 90 (SL), and Glu121. The active-site N6-AMP-lysine intermediate is the Lys123. NAD(+) is bound by residues Arg144, Glu179, Lys295, and Lys319. 4 residues coordinate Zn(2+): Cys413, Cys416, Cys431, and Cys437. The 80-residue stretch at 610 to 689 (RAQSSLTGKI…EEWLTLIKNA (80 aa)) folds into the BRCT domain.

This sequence belongs to the NAD-dependent DNA ligase family. LigA subfamily. It depends on Mg(2+) as a cofactor. Mn(2+) is required as a cofactor.

It carries out the reaction NAD(+) + (deoxyribonucleotide)n-3'-hydroxyl + 5'-phospho-(deoxyribonucleotide)m = (deoxyribonucleotide)n+m + AMP + beta-nicotinamide D-nucleotide.. In terms of biological role, DNA ligase that catalyzes the formation of phosphodiester linkages between 5'-phosphoryl and 3'-hydroxyl groups in double-stranded DNA using NAD as a coenzyme and as the energy source for the reaction. It is essential for DNA replication and repair of damaged DNA. In Rickettsia akari (strain Hartford), this protein is DNA ligase.